Here is a 188-residue protein sequence, read N- to C-terminus: dCTP deaminase (188 aa).

DCTP-binding positions include 111 to 116, 135 to 137, Gln156, Tyr170, and Gln180; these read KSTYAR and TLE. The active-site Proton donor/acceptor is the Glu137.

Belongs to the dCTP deaminase family. Homotrimer.

It carries out the reaction dCTP + H2O + H(+) = dUTP + NH4(+). Its pathway is pyrimidine metabolism; dUMP biosynthesis; dUMP from dCTP (dUTP route): step 1/2. Catalyzes the deamination of dCTP to dUTP. The polypeptide is dCTP deaminase (Francisella tularensis subsp. tularensis (strain FSC 198)).